The chain runs to 833 residues: Patatin-like phospholipase domain-containing protein SNOG_00918 (833 aa).

2 disordered regions span residues 1 to 20 (MTDVKKESDGPEPYSSSAFD) and 49 to 71 (HLSPSTEDLTAPQPETGKFSANN). The helical transmembrane segment at 108-128 (WPLLVVVLGWLLFLSIAYVFT) threads the bilayer. One can recognise a PNPLA domain in the interval 301–457 (LCLSGGATFA…RTDIPLKALN (157 aa)). Residues 332–336 (GTSGG) carry the GXSXG motif. Serine 334 acts as the Nucleophile in catalysis. Aspartate 444 acts as the Proton acceptor in catalysis. 2 disordered regions span residues 630–657 (TKSKSPSEEAIYPLSGSESSSSADFSRP) and 680–833 (LRTD…GKGL). Positions 644 to 655 (SGSESSSSADFS) are enriched in low complexity. Over residues 689–707 (DTPNSPSLSARLTGWWNTK) the composition is skewed to polar residues. Composition is skewed to basic and acidic residues over residues 740-750 (RPPKEVRDLQA), 759-769 (RNSDFLEEIRR), and 782-794 (DEGRAGRYRRGDV). A compositionally biased stretch (acidic residues) spans 809 to 819 (EFGDNEGDGEE).

This sequence belongs to the PLPL family.

The protein localises to the membrane. In terms of biological role, probable lipid hydrolase. The chain is Patatin-like phospholipase domain-containing protein SNOG_00918 from Phaeosphaeria nodorum (strain SN15 / ATCC MYA-4574 / FGSC 10173) (Glume blotch fungus).